Here is a 161-residue protein sequence, read N- to C-terminus: MORN repeat-containing protein 5 (161 aa).

MORN repeat units lie at residues 8–30 (YIGE…TETI), 31–53 (YVGE…SGSQ), and 54–75 (YDAI…DGLH).

As to expression, expressed in sperm (at protein level).

The protein localises to the cell projection. It is found in the cilium. It localises to the flagellum. The polypeptide is MORN repeat-containing protein 5 (MORN5) (Homo sapiens (Human)).